Consider the following 481-residue polypeptide: MVLSIQTNKNVGSITQIIGPVIDAAFAPGQLPNIYNALVIKGTNQAGQEVAVTCEVQQLLGDHCVRAVAMNATDGLMRGMNIVDTGKPLTVPVGKVTLGRIFNVLGEPVDGLEAVDSKESLPIHRKAPAFVDLDTKLAIFETGIKVVDLLAPYRRGGKIGLFGGAGVGKTVLIMELINNIAKAHGGVSVFGGVGERTREGNDLYMEMKESGVIQEKNMSASKVALVYGQMNEPPGARMRVGLTALTMAEYFRDINKQDVLLFIDNIFRFVQAGSEVSALLGRMPSAVGYQPTLATEMGGLQERITSTKDGSITSIQAVYVPADDLTDPAPATTFAHLDATTVLSRGLASKGIYPAVDPLDSTSTMLQPWIVGEEHYSCAQNVKETLQRYKELQDIIAILGLDELSEEDRKVVARARKIERFLSQPFFVAEVFTGSPGKYVSLKETIQGFNKILTGELDDLPEQAFYLVGTLDEAVAKAATL.

163–170 (GGAGVGKT) contacts ATP.

Belongs to the ATPase alpha/beta chains family. As to quaternary structure, F-type ATPases have 2 components, CF(1) - the catalytic core - and CF(0) - the membrane proton channel. CF(1) has five subunits: alpha(3), beta(3), gamma(1), delta(1), epsilon(1). CF(0) has four main subunits: a(1), b(1), b'(1) and c(9-12).

The protein localises to the plastid. Its subcellular location is the chloroplast thylakoid membrane. It catalyses the reaction ATP + H2O + 4 H(+)(in) = ADP + phosphate + 5 H(+)(out). Functionally, produces ATP from ADP in the presence of a proton gradient across the membrane. The catalytic sites are hosted primarily by the beta subunits. The sequence is that of ATP synthase subunit beta, chloroplastic from Tupiella akineta (Green alga).